The following is a 185-amino-acid chain: Large ribosomal subunit protein uL22 (185 aa).

It belongs to the universal ribosomal protein uL22 family.

This Debaryomyces hansenii (strain ATCC 36239 / CBS 767 / BCRC 21394 / JCM 1990 / NBRC 0083 / IGC 2968) (Yeast) protein is Large ribosomal subunit protein uL22 (RPL17).